Here is a 138-residue protein sequence, read N- to C-terminus: Small ribosomal subunit protein uS9 (138 aa).

Belongs to the universal ribosomal protein uS9 family.

In Sulfolobus acidocaldarius (strain ATCC 33909 / DSM 639 / JCM 8929 / NBRC 15157 / NCIMB 11770), this protein is Small ribosomal subunit protein uS9 (rps9).